Consider the following 616-residue polypeptide: Dihydroxy-acid dehydratase (616 aa).

Residue D81 coordinates Mg(2+). Position 122 (C122) interacts with [2Fe-2S] cluster. Positions 123 and 124 each coordinate Mg(2+). N6-carboxylysine is present on K124. C196 contacts [2Fe-2S] cluster. Residue E496 participates in Mg(2+) binding. Catalysis depends on S522, which acts as the Proton acceptor.

Belongs to the IlvD/Edd family. Homodimer. [2Fe-2S] cluster serves as cofactor. Requires Mg(2+) as cofactor.

It carries out the reaction (2R)-2,3-dihydroxy-3-methylbutanoate = 3-methyl-2-oxobutanoate + H2O. The enzyme catalyses (2R,3R)-2,3-dihydroxy-3-methylpentanoate = (S)-3-methyl-2-oxopentanoate + H2O. It participates in amino-acid biosynthesis; L-isoleucine biosynthesis; L-isoleucine from 2-oxobutanoate: step 3/4. The protein operates within amino-acid biosynthesis; L-valine biosynthesis; L-valine from pyruvate: step 3/4. In terms of biological role, functions in the biosynthesis of branched-chain amino acids. Catalyzes the dehydration of (2R,3R)-2,3-dihydroxy-3-methylpentanoate (2,3-dihydroxy-3-methylvalerate) into 2-oxo-3-methylpentanoate (2-oxo-3-methylvalerate) and of (2R)-2,3-dihydroxy-3-methylbutanoate (2,3-dihydroxyisovalerate) into 2-oxo-3-methylbutanoate (2-oxoisovalerate), the penultimate precursor to L-isoleucine and L-valine, respectively. This Streptomyces griseus subsp. griseus (strain JCM 4626 / CBS 651.72 / NBRC 13350 / KCC S-0626 / ISP 5235) protein is Dihydroxy-acid dehydratase.